Reading from the N-terminus, the 139-residue chain is Protein cornichon homolog 4 (139 aa).

Helical transmembrane passes span Val-5–Ile-25, Ile-57–Val-77, and Leu-118–Asn-138.

The protein belongs to the cornichon family. In terms of assembly, interacts with Sec23/24 complex components SEC24B and SEC24D. Interacts with CCR5. Interacts with ADRB2 in the early secretory pathway.

The protein resides in the membrane. Its subcellular location is the endoplasmic reticulum. It localises to the endoplasmic reticulum-Golgi intermediate compartment. In terms of biological role, involved in G protein-coupled receptors (GPCRs) trafficking from the endoplasmic reticulum to the cell surface; it promotes the exit of GPCRs from the early secretory pathway, likely through interaction with the COPII machinery. The protein is Protein cornichon homolog 4 (CNIH4) of Homo sapiens (Human).